The sequence spans 178 residues: Probable chorismate pyruvate-lyase (178 aa).

Positions 73, 111, and 163 each coordinate substrate.

Belongs to the UbiC family.

It is found in the cytoplasm. The catalysed reaction is chorismate = 4-hydroxybenzoate + pyruvate. Its pathway is cofactor biosynthesis; ubiquinone biosynthesis. Its function is as follows. Removes the pyruvyl group from chorismate, with concomitant aromatization of the ring, to provide 4-hydroxybenzoate (4HB) for the ubiquinone pathway. This is Probable chorismate pyruvate-lyase from Pseudomonas aeruginosa (strain UCBPP-PA14).